Here is a 294-residue protein sequence, read N- to C-terminus: Bifunctional protein FolD (294 aa).

Residues 169 to 171 (GRG), Thr196, and Val237 each bind NADP(+).

The protein belongs to the tetrahydrofolate dehydrogenase/cyclohydrolase family. As to quaternary structure, homodimer.

It catalyses the reaction (6R)-5,10-methylene-5,6,7,8-tetrahydrofolate + NADP(+) = (6R)-5,10-methenyltetrahydrofolate + NADPH. The catalysed reaction is (6R)-5,10-methenyltetrahydrofolate + H2O = (6R)-10-formyltetrahydrofolate + H(+). Its pathway is one-carbon metabolism; tetrahydrofolate interconversion. Functionally, catalyzes the oxidation of 5,10-methylenetetrahydrofolate to 5,10-methenyltetrahydrofolate and then the hydrolysis of 5,10-methenyltetrahydrofolate to 10-formyltetrahydrofolate. This Renibacterium salmoninarum (strain ATCC 33209 / DSM 20767 / JCM 11484 / NBRC 15589 / NCIMB 2235) protein is Bifunctional protein FolD.